A 295-amino-acid polypeptide reads, in one-letter code: MIKVFNRKEKIYDIEKVAGDNYLKWIYSSPVGLNFLELMIKKKFFSKLYGKYCDSKHSAKKVSKFIDDFNINEKEFTLKKSDFKSFNDFFYRKLNNDARPIINDENILISPADGRLFAYENIDIHNLIQVKGLTYSLDELLKNIELAEKYIGGTCLLFRLAPVDYHRFHFIDDGICEEAVKISGSYYSVNPIALEKVPKLFCENKREYSIFHSKHFGDVLYVDVGATCVGSIIQTYTPNEYVVKGDEKGYFKFGGSTIILFFEKDKIIVDKDIVEQTQKGFECKVLMGEKIGTKL.

Active-site charge relay system; for autoendoproteolytic cleavage activity residues include D113, H169, and S256. The active-site Schiff-base intermediate with substrate; via pyruvic acid; for decarboxylase activity is the S256. Pyruvic acid (Ser); by autocatalysis is present on S256.

This sequence belongs to the phosphatidylserine decarboxylase family. PSD-B subfamily. Prokaryotic type II sub-subfamily. In terms of assembly, heterodimer of a large membrane-associated beta subunit and a small pyruvoyl-containing alpha subunit. The cofactor is pyruvate. Post-translationally, is synthesized initially as an inactive proenzyme. Formation of the active enzyme involves a self-maturation process in which the active site pyruvoyl group is generated from an internal serine residue via an autocatalytic post-translational modification. Two non-identical subunits are generated from the proenzyme in this reaction, and the pyruvate is formed at the N-terminus of the alpha chain, which is derived from the carboxyl end of the proenzyme. The autoendoproteolytic cleavage occurs by a canonical serine protease mechanism, in which the side chain hydroxyl group of the serine supplies its oxygen atom to form the C-terminus of the beta chain, while the remainder of the serine residue undergoes an oxidative deamination to produce ammonia and the pyruvoyl prosthetic group on the alpha chain. During this reaction, the Ser that is part of the protease active site of the proenzyme becomes the pyruvoyl prosthetic group, which constitutes an essential element of the active site of the mature decarboxylase.

The protein localises to the cell membrane. The enzyme catalyses a 1,2-diacyl-sn-glycero-3-phospho-L-serine + H(+) = a 1,2-diacyl-sn-glycero-3-phosphoethanolamine + CO2. The protein operates within phospholipid metabolism; phosphatidylethanolamine biosynthesis; phosphatidylethanolamine from CDP-diacylglycerol: step 2/2. Functionally, catalyzes the formation of phosphatidylethanolamine (PtdEtn) from phosphatidylserine (PtdSer). This is Phosphatidylserine decarboxylase proenzyme from Clostridium novyi (strain NT).